The following is a 921-amino-acid chain: Extended synaptotagmin-2 (921 aa).

Residues 1–103 are Cytoplasmic-facing; sequence MTANRDAALS…RPGGPENPGG (103 aa). A disordered region spans residues 1 to 103; it reads MTANRDAALS…RPGGPENPGG (103 aa). Over residues 58-75 the composition is skewed to basic residues; that stretch reads GARRRAKTARGLRGHRQR. The helical transmembrane segment at 104–124 threads the bilayer; it reads VLSVELPGLLAQLARSFALLL. The Lumenal portion of the chain corresponds to 125-127; that stretch reads PVY. A helical membrane pass occupies residues 128-148; that stretch reads ALGYLGLSFSWVLLALALLAW. Over 149–921 the chain is Cytoplasmic; it reads CRRSRGLKAL…EDGTRPQAMT (773 aa). One can recognise an SMP-LTD domain in the interval 191–370; the sequence is DTERAEWLNK…LPNRITVPLV (180 aa). 2 C2 domains span residues 369-489 and 514-639; these read LVSE…DEWF and NLDK…QLSN. Residues K400, D401, D413, D460, E461, D462, D464, D466, and D467 each contribute to the Ca(2+) site. Residues 660-754 are disordered; that stretch reads RERPPDHQHS…GHISVKEPTP (95 aa). 2 positions are modified to phosphoserine: S691 and S693. T705 bears the Phosphothreonine mark. Phosphoserine occurs at positions 736, 738, 739, 743, 748, 755, 758, and 761. A C2 3 domain is found at 786–908; sequence PLGQIQLTIR…ELAKGWTQWY (123 aa). Residues 833-840 form a required for phosphatidylinositol 4,5-bisphosphate-dependent location at the cell membrane region; the sequence is KRRSGRRK.

This sequence belongs to the extended synaptotagmin family. Homodimer. Interacts with ESYT1 and ESYT3. Interacts with FGFR1 that has been activated by FGF1 binding. Interacts with the AP-2 complex; identified in a complex with the AP-2 complex and FGFR1. In terms of tissue distribution, widely expressed with high level in cerebellum.

Its subcellular location is the cell membrane. The protein localises to the endoplasmic reticulum membrane. Functionally, tethers the endoplasmic reticulum to the cell membrane and promotes the formation of appositions between the endoplasmic reticulum and the cell membrane. Binds glycerophospholipids in a barrel-like domain and may play a role in cellular lipid transport. Plays a role in FGF signaling via its role in the rapid internalization of FGFR1 that has been activated by FGF1 binding; this occurs most likely via the AP-2 complex. Promotes the localization of SACM1L at endoplasmic reticulum-plasma membrane contact sites (EPCS). In Homo sapiens (Human), this protein is Extended synaptotagmin-2.